The sequence spans 198 residues: B9 domain-containing protein 1 (198 aa).

The C2 B9-type domain occupies 8–126 (FLLNVSGQIE…TIPMFVPESS (119 aa)).

It belongs to the B9D family. As to quaternary structure, part of the tectonic-like complex (also named B9 complex).

It is found in the cytoplasm. Its subcellular location is the cytoskeleton. The protein resides in the cilium basal body. Functionally, component of the tectonic-like complex, a complex localized at the transition zone of primary cilia and acting as a barrier that prevents diffusion of transmembrane proteins between the cilia and plasma membranes. Required for ciliogenesis and sonic hedgehog/SHH signaling. The sequence is that of B9 domain-containing protein 1 (b9d1) from Xenopus laevis (African clawed frog).